A 620-amino-acid polypeptide reads, in one-letter code: Endoglucanase 6 (620 aa).

An N-terminal signal peptide occupies residues 1 to 22; it reads MEKFAPVAALLLLLLCFPVAFS. The Nucleophile role is filled by Asp78. Catalysis depends on residues His411, Asp463, and Glu472. Residues Asn554 and Asn564 are each glycosylated (N-linked (GlcNAc...) asparagine).

The protein belongs to the glycosyl hydrolase 9 (cellulase E) family.

The protein localises to the secreted. The enzyme catalyses Endohydrolysis of (1-&gt;4)-beta-D-glucosidic linkages in cellulose, lichenin and cereal beta-D-glucans.. This chain is Endoglucanase 6, found in Arabidopsis thaliana (Mouse-ear cress).